Here is a 35-residue protein sequence, read N- to C-terminus: MDQNEANIYNENNENNENNENENCQNEPIRIKIII.

Residues 1-27 (MDQNEANIYNENNENNENNENENCQNE) are compositionally biased toward low complexity. A disordered region spans residues 1–35 (MDQNEANIYNENNENNENNENENCQNEPIRIKIII).

This is an uncharacterized protein from Dictyostelium discoideum (Social amoeba).